The following is an 812-amino-acid chain: Probable E3 ubiquitin-protein ligase hulA (812 aa).

In terms of domain architecture, C2 spans methionine 1–arginine 109. Disordered regions lie at residues asparagine 131 to arginine 235 and arginine 250 to aspartate 350. 4 stretches are compositionally biased toward polar residues: residues methionine 148–proline 165, alanine 174–valine 199, serine 214–aspartate 223, and arginine 250–arginine 267. The region spanning glycine 226–asparagine 259 is the WW 1 domain. The segment covering leucine 276–threonine 291 has biased composition (basic and acidic residues). The span at glycine 292–glutamine 306 shows a compositional bias: polar residues. Low complexity predominate over residues threonine 307–glycine 330. 2 WW domains span residues glycine 330–arginine 363 and glycine 390–leucine 423. One can recognise an HECT domain in the interval serine 479 to glutamate 812. The Glycyl thioester intermediate role is filled by cysteine 780.

Belongs to the RSP5/NEDD4 family. Interacts with creD.

It is found in the cytoplasm. It carries out the reaction S-ubiquitinyl-[E2 ubiquitin-conjugating enzyme]-L-cysteine + [acceptor protein]-L-lysine = [E2 ubiquitin-conjugating enzyme]-L-cysteine + N(6)-ubiquitinyl-[acceptor protein]-L-lysine.. It functions in the pathway protein modification; protein ubiquitination. In terms of biological role, E3 ubiquitin-protein ligase which accepts ubiquitin from an E2 ubiquitin-conjugating enzyme in the form of a thioester and then directly transfers the ubiquitin to targeted substrates. Probably involved in the regulatory network controlling carbon source utilization. The protein is Probable E3 ubiquitin-protein ligase hulA (hulA) of Aspergillus flavus (strain ATCC 200026 / FGSC A1120 / IAM 13836 / NRRL 3357 / JCM 12722 / SRRC 167).